We begin with the raw amino-acid sequence, 211 residues long: Metalloproteinase inhibitor 3 (211 aa).

The N-terminal stretch at 1–23 (MTPWLGLVVLLGSWSLGDWGAEA) is a signal peptide. Zn(2+) is bound at residue C24. Involved in metalloproteinase-binding stretches follow at residues 24–27 (CTCS) and 88–89 (ES). 6 disulfide bridges follow: C24/C91, C26/C118, C36/C143, C145/C192, C150/C155, and C163/C184. An NTR domain is found at 24 to 143 (CTCSPSHPQD…GLNYRYHLGC (120 aa)). A mediates interaction with EFEMP1 region spans residues 105–188 (TGRVYDGKMY…SKHYACIRQK (84 aa)). N-linked (GlcNAc...) asparagine glycosylation occurs at N207.

It belongs to the protease inhibitor I35 (TIMP) family. Interacts with EFEMP1. Interacts with KDR.

The protein resides in the secreted. The protein localises to the extracellular space. It is found in the extracellular matrix. Functionally, mediates a variety of processes including matrix regulation and turnover, inflammation, and angiogenesis, through reversible inhibition of zinc protease superfamily enzymes, primarily matrix metalloproteinases (MMPs). Regulates extracellular matrix (ECM) remodeling through inhibition of matrix metalloproteinases (MMP) including MMP-1, MMP-2, MMP-3, MMP-7, MMP-9, MMP-13, MMP-14 and MMP-15. Additionally, modulates the processing of amyloid precursor protein (APP) and apolipoprotein E receptor ApoER2 by inhibiting two alpha-secretases ADAM10 and ADAM17. Functions as a tumor suppressor and a potent inhibitor of angiogenesis. Exerts its anti-angiogenic effect by directly interacting with vascular endothelial growth factor (VEGF) receptor-2/KDR, preventing its binding to the VEGFA ligand. Selectively induces apoptosis in angiogenic endothelial cells through a caspase-independent cell death pathway. Mechanistically, inhibits matrix-induced focal adhesion kinase PTK2 tyrosine phosphorylation and association with paxillin/PXN and disrupts the incorporation of ITGB3, PTK2 and PXN into focal adhesion contacts on the matrix. The sequence is that of Metalloproteinase inhibitor 3 (TIMP3) from Equus caballus (Horse).